Here is a 262-residue protein sequence, read N- to C-terminus: Pyridoxine 5'-phosphate synthase (262 aa).

A 3-amino-2-oxopropyl phosphate-binding site is contributed by asparagine 6. Aspartate 8–histidine 9 is a binding site for 1-deoxy-D-xylulose 5-phosphate. Arginine 17 is a binding site for 3-amino-2-oxopropyl phosphate. Catalysis depends on histidine 43, which acts as the Proton acceptor. Residues arginine 45 and histidine 50 each coordinate 1-deoxy-D-xylulose 5-phosphate. The active-site Proton acceptor is the glutamate 70. Threonine 102 provides a ligand contact to 1-deoxy-D-xylulose 5-phosphate. Histidine 215 functions as the Proton donor in the catalytic mechanism. Residues glycine 216 and glycine 237–histidine 238 contribute to the 3-amino-2-oxopropyl phosphate site.

It belongs to the PNP synthase family. In terms of assembly, homooctamer; tetramer of dimers.

The protein resides in the cytoplasm. The enzyme catalyses 3-amino-2-oxopropyl phosphate + 1-deoxy-D-xylulose 5-phosphate = pyridoxine 5'-phosphate + phosphate + 2 H2O + H(+). It functions in the pathway cofactor biosynthesis; pyridoxine 5'-phosphate biosynthesis; pyridoxine 5'-phosphate from D-erythrose 4-phosphate: step 5/5. In terms of biological role, catalyzes the complicated ring closure reaction between the two acyclic compounds 1-deoxy-D-xylulose-5-phosphate (DXP) and 3-amino-2-oxopropyl phosphate (1-amino-acetone-3-phosphate or AAP) to form pyridoxine 5'-phosphate (PNP) and inorganic phosphate. The polypeptide is Pyridoxine 5'-phosphate synthase (Helicobacter pylori (strain ATCC 700392 / 26695) (Campylobacter pylori)).